The following is a 207-amino-acid chain: ATP-dependent Clp protease proteolytic subunit (207 aa).

Ser111 functions as the Nucleophile in the catalytic mechanism. Residue His136 is part of the active site.

It belongs to the peptidase S14 family. Fourteen ClpP subunits assemble into 2 heptameric rings which stack back to back to give a disk-like structure with a central cavity, resembling the structure of eukaryotic proteasomes.

The protein resides in the cytoplasm. It carries out the reaction Hydrolysis of proteins to small peptides in the presence of ATP and magnesium. alpha-casein is the usual test substrate. In the absence of ATP, only oligopeptides shorter than five residues are hydrolyzed (such as succinyl-Leu-Tyr-|-NHMec, and Leu-Tyr-Leu-|-Tyr-Trp, in which cleavage of the -Tyr-|-Leu- and -Tyr-|-Trp bonds also occurs).. In terms of biological role, cleaves peptides in various proteins in a process that requires ATP hydrolysis. Has a chymotrypsin-like activity. Plays a major role in the degradation of misfolded proteins. The polypeptide is ATP-dependent Clp protease proteolytic subunit (Aeromonas salmonicida (strain A449)).